A 422-amino-acid polypeptide reads, in one-letter code: Enolase (422 aa).

Gln-161 contacts (2R)-2-phosphoglycerate. Glu-203 acts as the Proton donor in catalysis. Mg(2+) is bound by residues Asp-240, Glu-283, and Asp-310. The (2R)-2-phosphoglycerate site is built by Lys-335, Arg-364, Ser-365, and Lys-386. Lys-335 functions as the Proton acceptor in the catalytic mechanism.

The protein belongs to the enolase family. Requires Mg(2+) as cofactor.

The protein localises to the cytoplasm. The protein resides in the secreted. It is found in the cell surface. The enzyme catalyses (2R)-2-phosphoglycerate = phosphoenolpyruvate + H2O. The protein operates within carbohydrate degradation; glycolysis; pyruvate from D-glyceraldehyde 3-phosphate: step 4/5. Its function is as follows. Catalyzes the reversible conversion of 2-phosphoglycerate (2-PG) into phosphoenolpyruvate (PEP). It is essential for the degradation of carbohydrates via glycolysis. This is Enolase from Deinococcus radiodurans (strain ATCC 13939 / DSM 20539 / JCM 16871 / CCUG 27074 / LMG 4051 / NBRC 15346 / NCIMB 9279 / VKM B-1422 / R1).